A 126-amino-acid chain; its full sequence is MFS14 protein (126 aa).

A signal peptide (or 24, or 26) is located at residues 1–23 (MALEAATAPRALLAACLVLLVLG).

Enhanced expression in male flowers. Accumulates in the tapetum.

The sequence is that of MFS14 protein (MFS14) from Zea mays (Maize).